Here is a 122-residue protein sequence, read N- to C-terminus: Large ribosomal subunit protein uL14 (122 aa).

It belongs to the universal ribosomal protein uL14 family. As to quaternary structure, part of the 50S ribosomal subunit. Forms a cluster with proteins L3 and L19. In the 70S ribosome, L14 and L19 interact and together make contacts with the 16S rRNA in bridges B5 and B8.

Binds to 23S rRNA. Forms part of two intersubunit bridges in the 70S ribosome. This Desulfatibacillum aliphaticivorans protein is Large ribosomal subunit protein uL14.